The following is a 387-amino-acid chain: S-adenosylmethionine synthase (387 aa).

Histidine 15 contacts ATP. Aspartate 17 is a Mg(2+) binding site. Residue glutamate 43 coordinates K(+). 2 residues coordinate L-methionine: glutamate 56 and glutamine 99. Positions 99–109 (QSPDIALGVNR) are flexible loop. Residues 166-168 (DAK), 232-233 (RF), aspartate 241, 247-248 (RK), alanine 264, and lysine 268 contribute to the ATP site. Residue aspartate 241 participates in L-methionine binding. Lysine 272 is a binding site for L-methionine.

The protein belongs to the AdoMet synthase family. As to quaternary structure, homotetramer; dimer of dimers. Mg(2+) serves as cofactor. The cofactor is K(+).

The protein localises to the cytoplasm. It catalyses the reaction L-methionine + ATP + H2O = S-adenosyl-L-methionine + phosphate + diphosphate. It functions in the pathway amino-acid biosynthesis; S-adenosyl-L-methionine biosynthesis; S-adenosyl-L-methionine from L-methionine: step 1/1. Catalyzes the formation of S-adenosylmethionine (AdoMet) from methionine and ATP. The overall synthetic reaction is composed of two sequential steps, AdoMet formation and the subsequent tripolyphosphate hydrolysis which occurs prior to release of AdoMet from the enzyme. In Nitrosomonas eutropha (strain DSM 101675 / C91 / Nm57), this protein is S-adenosylmethionine synthase.